A 245-amino-acid chain; its full sequence is Orotidine 5'-phosphate decarboxylase (245 aa).

Substrate-binding positions include Asp-22, Lys-44, Asp-71 to Thr-80, Thr-131, Arg-192, Gln-201, Gly-221, and Arg-222. Residue Lys-73 is the Proton donor of the active site.

The protein belongs to the OMP decarboxylase family. Type 1 subfamily. In terms of assembly, homodimer.

It carries out the reaction orotidine 5'-phosphate + H(+) = UMP + CO2. It participates in pyrimidine metabolism; UMP biosynthesis via de novo pathway; UMP from orotate: step 2/2. Its function is as follows. Catalyzes the decarboxylation of orotidine 5'-monophosphate (OMP) to uridine 5'-monophosphate (UMP). This chain is Orotidine 5'-phosphate decarboxylase, found in Salmonella gallinarum (strain 287/91 / NCTC 13346).